Here is a 1273-residue protein sequence, read N- to C-terminus: Inverted formin-2 (1273 aa).

Disordered stretches follow at residues 1-30 (MSVKEGAQRKWAALKEKLGPQDSDPTEANL), 346-387 (GRPR…GQQP), 427-559 (LSSS…PLPG), 960-999 (NKDRKEQMAKAERRKQQLAEEEARRPRDEDGKPIRKGPGK), and 1021-1273 (KTAR…CVIQ). S2 bears the N-acetylserine mark. Residues 2-330 (SVKEGAQRKW…RAVLLASDAQ (329 aa)) form the GBD/FH3 domain. At S351 the chain carries Phosphoserine. The span at 359-382 (SVQTNSVQNQGSSSQNTTTPTTKV) shows a compositional bias: low complexity. Residues 421-564 (PLPTPPLSSS…PPLPGFSVPS (144 aa)) form the FH1 domain. Composition is skewed to pro residues over residues 433–516 (VLPP…PLPS) and 524–558 (QPPPPPPPPLPGMCPVPPPPPLPRAGQIPPPPPLP). Residues 589–979 (HRRVNPPTLR…AERRKQQLAE (391 aa)) form the FH2 domain. Residues 907 to 984 (EASQELDKVF…QQLAEEEARR (78 aa)) are a coiled coil. The WH2 domain maps to 1007 to 1022 (DALLADIRKGFQLRKT). Positions 1047 to 1059 (ATASNPTQGTNHP) are enriched in polar residues. Over residues 1088 to 1101 (SKEEDGPPALERRS) the composition is skewed to basic and acidic residues. Residues S1172 and S1174 each carry the phosphoserine modification. The segment covering 1195–1204 (GEDEDGEDTA) has biased composition (acidic residues). T1203 bears the Phosphothreonine mark. 2 positions are modified to phosphoserine: S1216 and S1218. Residues T1223 and T1230 each carry the phosphothreonine modification. The segment covering 1242–1251 (TSKRRKKRPS) has biased composition (basic residues).

Belongs to the formin homology family. In terms of assembly, interacts with profilin and actin at the FH1 and FH2 domains respectively. Interacts with DAAM2.

It localises to the cytoplasm. The protein localises to the perinuclear region. Phosphate inhibits both the depolymerization and severing activities. Severs actin filaments and accelerates their polymerization and depolymerization. This chain is Inverted formin-2 (Inf2), found in Mus musculus (Mouse).